The sequence spans 457 residues: Argininosuccinate lyase (457 aa).

The protein belongs to the lyase 1 family. Argininosuccinate lyase subfamily.

The protein localises to the cytoplasm. The catalysed reaction is 2-(N(omega)-L-arginino)succinate = fumarate + L-arginine. It functions in the pathway amino-acid biosynthesis; L-arginine biosynthesis; L-arginine from L-ornithine and carbamoyl phosphate: step 3/3. This chain is Argininosuccinate lyase, found in Staphylococcus carnosus (strain TM300).